Consider the following 146-residue polypeptide: 3-dehydroquinate dehydratase (146 aa).

Tyr-22 acts as the Proton acceptor in catalysis. Substrate is bound by residues Asn-73, His-79, and Asp-86. His-99 acts as the Proton donor in catalysis. Substrate contacts are provided by residues 100 to 101 and Arg-110; that span reads LS.

This sequence belongs to the type-II 3-dehydroquinase family. Homododecamer.

The catalysed reaction is 3-dehydroquinate = 3-dehydroshikimate + H2O. The protein operates within metabolic intermediate biosynthesis; chorismate biosynthesis; chorismate from D-erythrose 4-phosphate and phosphoenolpyruvate: step 3/7. Its function is as follows. Catalyzes a trans-dehydration via an enolate intermediate. This chain is 3-dehydroquinate dehydratase, found in Synechococcus sp. (strain CC9605).